Consider the following 288-residue polypeptide: Stage IV sporulation protein FB (288 aa).

The Mother cell cytoplasmic portion of the chain corresponds to 1-10 (MNKWLDLILK). Residues 11–30 (IHVHPFLWIIAALGLLTGHM) traverse the membrane as a helical segment. Residue Lys-31 is a topological domain, forespore intermembrane space. A helical membrane pass occupies residues 32–56 (ALLCLLLIVLIHELGHAALAVFFSW). A Zn(2+)-binding site is contributed by His-43. The active site involves Glu-44. His-47 lines the Zn(2+) pocket. Residues 57–83 (RIKRVFLLPFGGTVEVEEHGNRPLKEE) are Mother cell cytoplasmic-facing. A helical transmembrane segment spans residues 84–105 (FAVIIAGPLQHIWLQFAAWMLA). At 106 to 126 (EVSVIHQHTFELFTFYNLSIL) the chain is on the forespore intermembrane space side. A helical transmembrane segment spans residues 127–146 (FVNLLPIWPLDGGKLLFLLF). Asp-137 provides a ligand contact to Zn(2+). At 147 to 161 (SKQLPFQKAHRLNLK) the chain is on the mother cell cytoplasmic side. A helical transmembrane segment spans residues 162–178 (TSLCFCLLLGCWVLFVI). Position 179 (Pro-179) is a topological domain, forespore intermembrane space. The chain crosses the membrane as a helical span at residues 180-199 (LQISAWVLFVFLAVSLFEEY). Residues 200–288 (RQRHYIHVRF…SSMEELLLPY (89 aa)) lie on the Mother cell cytoplasmic side of the membrane.

Belongs to the peptidase M50B family. In terms of assembly, forms a complex with SpoIVFA and BofA localized in the mother-cell membrane surrounding the forespore. Requires Zn(2+) as cofactor.

It is found in the forespore outer membrane. Its function is as follows. Implicated in the coupling of mother cell to forespore gene expression. Required for spore formation. Processes the pro-sigma K factor. The protein is Stage IV sporulation protein FB (spoIVFB) of Bacillus subtilis (strain 168).